A 62-amino-acid chain; its full sequence is Neurotoxin 3 (62 aa).

Residues 1 to 16 show a composition bias toward polar residues; it reads LECHDQQSSQTPTTTG. The disordered stretch occupies residues 1-22; sequence LECHDQQSSQTPTTTGCSGGET. Intrachain disulfides connect Cys-3–Cys-24, Cys-17–Cys-41, Cys-43–Cys-54, and Cys-55–Cys-60.

This sequence belongs to the three-finger toxin family. Short-chain subfamily. Type I alpha-neurotoxin sub-subfamily. In terms of tissue distribution, expressed by the venom gland.

The protein resides in the secreted. Binds to muscle nicotinic acetylcholine receptor (nAChR) and inhibit acetylcholine from binding to the receptor, thereby impairing neuromuscular transmission. This is Neurotoxin 3 from Naja sputatrix (Malayan spitting cobra).